The chain runs to 164 residues: UPF0303 protein Smed_2872 (164 aa).

This sequence belongs to the UPF0303 family.

The chain is UPF0303 protein Smed_2872 from Sinorhizobium medicae (strain WSM419) (Ensifer medicae).